A 141-amino-acid chain; its full sequence is Prefoldin subunit alpha (141 aa).

This sequence belongs to the prefoldin subunit alpha family. In terms of assembly, heterohexamer of two alpha and four beta subunits.

It is found in the cytoplasm. Molecular chaperone capable of stabilizing a range of proteins. Seems to fulfill an ATP-independent, HSP70-like function in archaeal de novo protein folding. The polypeptide is Prefoldin subunit alpha (pfdA) (Methanothermobacter thermautotrophicus (strain ATCC 29096 / DSM 1053 / JCM 10044 / NBRC 100330 / Delta H) (Methanobacterium thermoautotrophicum)).